The following is a 255-amino-acid chain: Hydroxyacylglutathione hydrolase (255 aa).

Zn(2+) contacts are provided by H56, H58, D60, H61, H114, D133, and H171.

Belongs to the metallo-beta-lactamase superfamily. Glyoxalase II family. In terms of assembly, monomer. It depends on Zn(2+) as a cofactor.

The enzyme catalyses an S-(2-hydroxyacyl)glutathione + H2O = a 2-hydroxy carboxylate + glutathione + H(+). The protein operates within secondary metabolite metabolism; methylglyoxal degradation; (R)-lactate from methylglyoxal: step 2/2. Thiolesterase that catalyzes the hydrolysis of S-D-lactoyl-glutathione to form glutathione and D-lactic acid. The protein is Hydroxyacylglutathione hydrolase of Rhodopseudomonas palustris (strain BisA53).